The primary structure comprises 473 residues: Arginine biosynthesis bifunctional protein ArgJ, mitochondrial (473 aa).

Substrate-binding residues include Thr-201, Lys-230, Thr-241, Glu-328, Asn-468, and Thr-473. The active-site Nucleophile is Thr-241.

It belongs to the ArgJ family. Heterodimer of an alpha and a beta chain. The alpha and beta chains are autoproteolytically processed from a single precursor protein within the mitochondrion.

Its subcellular location is the mitochondrion matrix. It catalyses the reaction N(2)-acetyl-L-ornithine + L-glutamate = N-acetyl-L-glutamate + L-ornithine. The catalysed reaction is L-glutamate + acetyl-CoA = N-acetyl-L-glutamate + CoA + H(+). It participates in amino-acid biosynthesis; L-arginine biosynthesis; L-ornithine and N-acetyl-L-glutamate from L-glutamate and N(2)-acetyl-L-ornithine (cyclic): step 1/1. It functions in the pathway amino-acid biosynthesis; L-arginine biosynthesis; N(2)-acetyl-L-ornithine from L-glutamate: step 1/4. Catalyzes two activities which are involved in the cyclic version of arginine biosynthesis: the synthesis of acetylglutamate from glutamate and acetyl-CoA, and of ornithine by transacetylation between acetylornithine and glutamate. The chain is Arginine biosynthesis bifunctional protein ArgJ, mitochondrial from Paracoccidioides lutzii (strain ATCC MYA-826 / Pb01) (Paracoccidioides brasiliensis).